A 120-amino-acid chain; its full sequence is uncharacterized protein (120 aa).

Positions 4-120 constitute a VOC domain; sequence QIGTVAVYVE…EDGNVFLLKE (117 aa).

This is an uncharacterized protein from Bacillus subtilis (strain 168).